Consider the following 467-residue polypeptide: H(+)/Cl(-) exchange transporter ClcA (467 aa).

Residues 1–30 (MTKRERIVKSVLAHVPKDAINQFVSRGSTP) lie on the Cytoplasmic side of the membrane. A helical membrane pass occupies residues 31-67 (FSVLIMAAIVGTLAGFVGTYFELAVHFVSETRTEWLR). Residues 68–74 (SEIGSVL) lie on the Periplasmic side of the membrane. Residues 75–98 (PLWLAAVLISALLAFIGYFLVHRF) form a helical membrane-spanning segment. Positions 104–108 (GSGIP) match the Selectivity filter part_1 motif. Serine 105 lines the chloride pocket. The helical intramembrane region spans 107-114 (IPEIEGAM). Topologically, residues 115-121 (DNIRPVR) are cytoplasmic. A run of 2 helical transmembrane segments spans residues 122–139 (WWRVLPVKFFGGMGALGS) and 146–164 (EGPTVQMGGAVGRMVTDIF). The Selectivity filter part_2 signature appears at 144–148 (GREGP). The Cytoplasmic portion of the chain corresponds to 165–174 (RVKDDDTRHS). Intramembrane regions (helical) lie at residues 175-187 (LLASGAAGGLAAA) and 191-199 (PLAGIMFVV). The Cytoplasmic portion of the chain corresponds to 200–212 (EEMRPQFRYSLIS). A helical transmembrane segment spans residues 213–230 (IRAVIISAIMANIVFRAI). Residues 231–250 (NGQDAVITMPQYQSPALQTL) lie on the Periplasmic side of the membrane. A helical membrane pass occupies residues 251 to 279 (WLFLLLGALFGVFGVIFNKLITVAQDSFV). Topologically, residues 280–285 (AIHKND) are cytoplasmic. The helical transmembrane segment at 286–307 (RKRYLITGSILGGVFGLLLLYV) threads the bilayer. Residues 308-327 (PQLTGGGIALIPDVTTGNYS) lie on the Periplasmic side of the membrane. Transmembrane regions (helical) follow at residues 328–347 (ISILVLLFIGRVVTTLLCFG) and 353–374 (GIFAPMLALGTLFGYAFGASAD). The Selectivity filter part_3 motif lies at 353–357 (GIFAP). The chloride site is built by isoleucine 354 and phenylalanine 355. Residues 375-384 (VLLPTLDIEP) lie on the Periplasmic side of the membrane. The helical intramembrane region spans 385-399 (GVFAIAGMGALFAAT). The note=Loop between two helices intramembrane region spans 400-402 (VRA). Residues 403–414 (PITGILLVIEMT) constitute an intramembrane region (helical). Residues 415-419 (NNYYL) constitute an intramembrane region (note=Loop between two helices). The helical transmembrane segment at 420–436 (ILPLIITCLGAVIVAQL) threads the bilayer. Residues 437–467 (LGGQPIYSQLLHRTLKNDKLRQQDLPENQAS) are Cytoplasmic-facing. Tyrosine 443 provides a ligand contact to chloride.

This sequence belongs to the chloride channel (TC 2.A.49) family. ClcA subfamily. As to quaternary structure, homodimer.

The protein resides in the cell inner membrane. The enzyme catalyses 2 chloride(in) + H(+)(out) = 2 chloride(out) + H(+)(in). In terms of biological role, proton-coupled chloride transporter. Functions as antiport system and exchanges two chloride ions for 1 proton. Probably acts as an electrical shunt for an outwardly-directed proton pump that is linked to amino acid decarboxylation, as part of the extreme acid resistance (XAR) response. This Vibrio parahaemolyticus serotype O3:K6 (strain RIMD 2210633) protein is H(+)/Cl(-) exchange transporter ClcA.